Here is a 188-residue protein sequence, read N- to C-terminus: Elongation factor P 1 (188 aa).

The protein belongs to the elongation factor P family.

It localises to the cytoplasm. Its pathway is protein biosynthesis; polypeptide chain elongation. Its function is as follows. Involved in peptide bond synthesis. Stimulates efficient translation and peptide-bond synthesis on native or reconstituted 70S ribosomes in vitro. Probably functions indirectly by altering the affinity of the ribosome for aminoacyl-tRNA, thus increasing their reactivity as acceptors for peptidyl transferase. In Mesorhizobium japonicum (strain LMG 29417 / CECT 9101 / MAFF 303099) (Mesorhizobium loti (strain MAFF 303099)), this protein is Elongation factor P 1.